We begin with the raw amino-acid sequence, 834 residues long: Translation initiation factor IF-2 (834 aa).

The segment at 1-247 (MTEEKKFSGS…STPATVRKEQ (247 aa)) is disordered. Over residues 45–101 (GGSRPSRPARPNNNNQNRPNNGGQSQNRNNQNRSNTSTGGQNRSNNGGNRNNRPGSR) the composition is skewed to low complexity. Residues 109-125 (PMIREKKNWSTKPREGQ) show a composition bias toward basic and acidic residues. Low complexity-rich tracts occupy residues 149-165 (ASAA…ATKP) and 173-201 (ATKP…SARN). The segment covering 224-233 (GSKKSRRIAA) has biased composition (basic residues). The region spanning 335 to 504 (SRPPVVTIMG…LLQAEVLELK (170 aa)) is the tr-type G domain. Residues 344 to 351 (GHVDHGKT) form a G1 region. A GTP-binding site is contributed by 344 to 351 (GHVDHGKT). A G2 region spans residues 369–373 (GITQH). Residues 390–393 (DTPG) are G3. Residues 390-394 (DTPGH) and 444-447 (NKID) contribute to the GTP site. Residues 444-447 (NKID) are G4. Positions 480-482 (SAK) are G5.

Belongs to the TRAFAC class translation factor GTPase superfamily. Classic translation factor GTPase family. IF-2 subfamily.

Its subcellular location is the cytoplasm. Functionally, one of the essential components for the initiation of protein synthesis. Protects formylmethionyl-tRNA from spontaneous hydrolysis and promotes its binding to the 30S ribosomal subunits. Also involved in the hydrolysis of GTP during the formation of the 70S ribosomal complex. This Leuconostoc mesenteroides subsp. mesenteroides (strain ATCC 8293 / DSM 20343 / BCRC 11652 / CCM 1803 / JCM 6124 / NCDO 523 / NBRC 100496 / NCIMB 8023 / NCTC 12954 / NRRL B-1118 / 37Y) protein is Translation initiation factor IF-2.